We begin with the raw amino-acid sequence, 738 residues long: Probable trehalase (738 aa).

Positions 1-44 (MLQGMPKRSGSISELHDPFSSPDVYYGPATDPRRQKQPNKYSRT) are disordered. Substrate-binding positions include Arg-289, 296–297 (WD), Asn-333, Arg-342, 342–344 (RSQ), and Gly-463. Catalysis depends on proton donor/acceptor residues Asp-465 and Glu-660.

This sequence belongs to the glycosyl hydrolase 37 family.

It catalyses the reaction alpha,alpha-trehalose + H2O = alpha-D-glucose + beta-D-glucose. In Eremothecium gossypii (strain ATCC 10895 / CBS 109.51 / FGSC 9923 / NRRL Y-1056) (Yeast), this protein is Probable trehalase (NTH2).